Consider the following 253-residue polypeptide: E3 ubiquitin-protein ligase MARCHF3 (253 aa).

The RING-CH-type zinc-finger motif lies at 63–123 (SPFNDRPMCR…ELCHFRFAVE (61 aa)). 8 residues coordinate Zn(2+): cysteine 71, cysteine 74, cysteine 87, cysteine 89, histidine 97, cysteine 100, cysteine 113, and cysteine 116. 2 consecutive transmembrane segments (helical) span residues 145-165 (LFGD…SGWL) and 182-202 (AVGL…WTLV). Serine 237 and serine 243 each carry phosphoserine.

As to quaternary structure, interacts with MARCHF2 and STX6.

It is found in the cytoplasmic vesicle membrane. It localises to the early endosome membrane. The enzyme catalyses S-ubiquitinyl-[E2 ubiquitin-conjugating enzyme]-L-cysteine + [acceptor protein]-L-lysine = [E2 ubiquitin-conjugating enzyme]-L-cysteine + N(6)-ubiquitinyl-[acceptor protein]-L-lysine.. It functions in the pathway protein modification; protein ubiquitination. Its function is as follows. E3 ubiquitin-protein ligase which may be involved in endosomal trafficking. E3 ubiquitin ligases accept ubiquitin from an E2 ubiquitin-conjugating enzyme in the form of a thioester and then directly transfer the ubiquitin to targeted substrates. This is E3 ubiquitin-protein ligase MARCHF3 from Homo sapiens (Human).